Here is a 279-residue protein sequence, read N- to C-terminus: Movement protein (279 aa).

This sequence belongs to the cucumovirus movement protein family.

The protein resides in the host cell junction. The protein localises to the host plasmodesma. Transports viral genome to neighboring plant cells directly through plasmosdesmata, without any budding. The movement protein allows efficient cell to cell propagation, by bypassing the host cell wall barrier. Acts by forming a tubular structure at the host plasmodesmata, enlarging it enough to allow free passage of virion capsids. In Cucumis sativus (Cucumber), this protein is Movement protein.